The chain runs to 675 residues: MNQNIQQQIDELRVTLRHHEYLYHVMDAPEIPDAEYDRLMNKLKALEAEHPELITPDSPTQRVGALPLTAFEQVRHEIPMLSLDNAFDETTYLAFDKRLRERLKNNEEITFCCELKLDGLAVSLLYENGRLVQAATRGDGTTGENITENVRTIKAIPLRLYGDNIPARIEIRGEVFMTEKGFEHLNEEARRTGGKVFANPRNAAAGSLRQLDPRITAKRPLTFFCYGVGVLEGGELPTSHYARLQQFKKWGLPVSDAIKLCTGTKAVLDFYHHVAEIRPNLGFDIDGVVIKVDDIALQEELGFVSRAPRWAIAYKFQAQEQMTVIKDVEFQVGRTGAITPVARLDPVQVAGVIVSNATLHNADEIERLGLRIGDTVVIRRAGDVIPQVVSVIEEKRPENAQEIVFPTQCPICQSDIERIEGEAVARCTGGLICAAQRKEALKHFVSRRAMDVDGMGDKIIDQLVEKEYVKTPADLFRLDEKILSGLERMGEKSAKKLLNALEKAKSTTFARFIYALGIREVGEATANGLTAHFVSLEALREANIEALKAVPDVGDIVAKHVVNFFQEEHNKNVIDQLVNDIGITWPAPVVATHEAGDNPFAGKTVVLTGSLSQLTRDEAKDRLVALGAKVSGSVSKKTDMVIAGEAAGSKLAKANELGITVIDEDEMIRLLDQSK.

NAD(+)-binding positions include 33–37, 82–83, and E114; these read DAEYD and SL. The N6-AMP-lysine intermediate role is filled by K116. The NAD(+) site is built by R137, E174, K291, and K315. Residues C409, C412, C427, and C433 each contribute to the Zn(2+) site. A BRCT domain is found at 595–675; sequence AGDNPFAGKT…EMIRLLDQSK (81 aa).

It belongs to the NAD-dependent DNA ligase family. LigA subfamily. Requires Mg(2+) as cofactor. The cofactor is Mn(2+).

It carries out the reaction NAD(+) + (deoxyribonucleotide)n-3'-hydroxyl + 5'-phospho-(deoxyribonucleotide)m = (deoxyribonucleotide)n+m + AMP + beta-nicotinamide D-nucleotide.. Its function is as follows. DNA ligase that catalyzes the formation of phosphodiester linkages between 5'-phosphoryl and 3'-hydroxyl groups in double-stranded DNA using NAD as a coenzyme and as the energy source for the reaction. It is essential for DNA replication and repair of damaged DNA. The chain is DNA ligase from Proteus mirabilis (strain HI4320).